The chain runs to 126 residues: Prefoldin subunit beta (126 aa).

It belongs to the prefoldin subunit beta family. Heterohexamer of two alpha and four beta subunits.

The protein resides in the cytoplasm. Functionally, molecular chaperone capable of stabilizing a range of proteins. Seems to fulfill an ATP-independent, HSP70-like function in archaeal de novo protein folding. In Pyrobaculum neutrophilum (strain DSM 2338 / JCM 9278 / NBRC 100436 / V24Sta) (Thermoproteus neutrophilus), this protein is Prefoldin subunit beta.